The sequence spans 303 residues: NAD kinase (303 aa).

Aspartate 71 functions as the Proton acceptor in the catalytic mechanism. NAD(+) is bound by residues 71–72 (DG), 145–146 (ND), arginine 156, arginine 173, aspartate 175, 186–191 (TGYSLS), and glutamine 245.

This sequence belongs to the NAD kinase family. The cofactor is a divalent metal cation.

The protein localises to the cytoplasm. It catalyses the reaction NAD(+) + ATP = ADP + NADP(+) + H(+). Involved in the regulation of the intracellular balance of NAD and NADP, and is a key enzyme in the biosynthesis of NADP. Catalyzes specifically the phosphorylation on 2'-hydroxyl of the adenosine moiety of NAD to yield NADP. This Magnetococcus marinus (strain ATCC BAA-1437 / JCM 17883 / MC-1) protein is NAD kinase.